The following is a 386-amino-acid chain: NifS-like protein (386 aa).

Residues 58–59 (SE) and 184–186 (SIN) contribute to the pyridoxal 5'-phosphate site.

Belongs to the class-V pyridoxal-phosphate-dependent aminotransferase family. NifS/IscS subfamily. It depends on pyridoxal 5'-phosphate as a cofactor.

Its subcellular location is the virion. The protein is NifS-like protein of Ornithodoros (relapsing fever ticks).